The primary structure comprises 336 residues: Fructose-1,6-bisphosphatase class 1 (336 aa).

Mg(2+)-binding residues include glutamate 90, aspartate 112, leucine 114, and aspartate 115. Substrate-binding positions include 115–118 (DGSS), asparagine 211, and lysine 277. Glutamate 283 serves as a coordination point for Mg(2+).

It belongs to the FBPase class 1 family. In terms of assembly, homotetramer. It depends on Mg(2+) as a cofactor.

The protein localises to the cytoplasm. The enzyme catalyses beta-D-fructose 1,6-bisphosphate + H2O = beta-D-fructose 6-phosphate + phosphate. Its pathway is carbohydrate biosynthesis; gluconeogenesis. This Pseudomonas entomophila (strain L48) protein is Fructose-1,6-bisphosphatase class 1.